The sequence spans 357 residues: Peptide chain release factor 1 (357 aa).

Q234 bears the N5-methylglutamine mark.

It belongs to the prokaryotic/mitochondrial release factor family. Methylated by PrmC. Methylation increases the termination efficiency of RF1.

The protein localises to the cytoplasm. Functionally, peptide chain release factor 1 directs the termination of translation in response to the peptide chain termination codons UAG and UAA. This chain is Peptide chain release factor 1, found in Chlorobaculum tepidum (strain ATCC 49652 / DSM 12025 / NBRC 103806 / TLS) (Chlorobium tepidum).